A 559-amino-acid chain; its full sequence is MEKPVVISQRTGKPKRRKAHRACIHCQRTHLTCDNNRPCERCVARGFADTCVDGVRKKLKYLDDKEDNKPSKGLSPAPGVNVQPKLSPATRSARSSSAGFPDTKGNMQQQHMGNMPVPNTPQNGHPNLGTPGMAHTNLQGPQRQGAQQPQGGQSSTPSQLPADYLIHQQLLATEINQLGDLGRTGEGDFSSDWFSDLQLSGHSFQSVATNMEYSILSNMVYSSGQPNSAVSNSLLLGNNSQSPNTHSPHNQDQPTPQAATPSAKIKQLIESNGLSAKDLNQYPLAGEFVNDTFLTVPEIVAFNETRRNVKDSELTTDEKLRPLSFAVAAGQPQNTNGNGNGSEAPDSPSKSIFSSGALEAVYSNLPDYTDPIQVYTNITKPFSYTPGYHGLISYLKGRFNKQQLVQMTKYMAEYRPSFIACTNSLKEEDLVFMEQCFQRALLEYQKFISFSGTPTLVWRRTGQLAAVGKEFCQLSGWSEQRLIGQQTFIVELLDDNSVLEYFELFSRIAFGDSRGATMADCTLLTPTGAKIKTSSIWTLKRDVFGNPMMIVGNFLPILS.

Residues C23–C51 constitute a DNA-binding region (zn(2)-C6 fungal-type). Disordered stretches follow at residues D63–Q159, S231–A263, and A329–S349. Low complexity-rich tracts occupy residues Q139 to Q159 and S231 to N244. The segment covering T245–T260 has biased composition (polar residues). The PAS domain maps to A440–D512.

This sequence belongs to the ERT1/acuK family.

The protein localises to the nucleus. Its function is as follows. Transcription factor which regulates nonfermentable carbon utilization. Activator of gluconeogenetic genes. The protein is Transcription activator of gluconeogenesis ERT1-2 (ERT1-2) of Yarrowia lipolytica (strain CLIB 122 / E 150) (Yeast).